Consider the following 1136-residue polypeptide: Collagen alpha-1(XIX) chain (1136 aa).

An N-terminal signal peptide occupies residues 1–23; that stretch reads MRHTGSWKLWTWVTTFLLPACTC. The N-linked (GlcNAc...) asparagine glycan is linked to Asn47. Residues 47 to 231 enclose the Laminin G-like domain; sequence NKSELSGFDL…LHQLRIYCNA (185 aa). Disordered regions lie at residues 252–272, 289–673, 699–1005, and 1043–1136; these read DFGS…SSYL, EEAG…PGDP, GLKS…TPAD, and SAQA…AGGK. Over residues 254 to 266 the composition is skewed to low complexity; sequence GSTTSSWGTSNTG. Residues 289 to 348 are triple-helical region 1 (COL1); that stretch reads EEAGLPGTLRSIGHKGDKGEPGEHGLDGTPGLPGQKGEQGLEGIKGEIGEKGEPGAKGDS. Collagen-like domains lie at 292 to 346, 347 to 388, and 389 to 430; these read GLPG…GAKG, DSGL…ALTG, and SIGI…GLQG. Composition is skewed to basic and acidic residues over residues 302–314 and 332–344; these read HKGD…EHGL and IKGE…EPGA. The triple-helical region 2 (COL2) stretch occupies residues 367–426; that stretch reads GPPGPKGDKGDMGPPGPPALTGSIGIQGPQGPPGKEGQRGRRGKTGPPGNPGPPGPPGPP. Over residues 387 to 401 the composition is skewed to low complexity; the sequence is TGSIGIQGPQGPPGK. Pro residues predominate over residues 414-426; it reads PGNPGPPGPPGPP. Over residues 428–437 the composition is skewed to low complexity; the sequence is LQGLQQPFGG. Positions 442–682 are triple-helical region 3 (COL3); sequence GTGEHGASGP…PIALPLLGDI (241 aa). The span at 472–490 shows a compositional bias: basic and acidic residues; the sequence is HKGEPGEPLTKGEKGDRGE. 2 stretches are compositionally biased toward low complexity: residues 511 to 523 and 567 to 577; these read LLGS…QQGP and PGLKGDAGPPG. Collagen-like domains lie at 519–577, 578–618, 620–673, 722–777, 778–810, and 833–891; these read GQQG…GPPG, ISLP…GPPG, GIPG…PGDP, KGDV…GPPG, LTGR…GPPG, and GYPG…APGP. Residues 634 to 645 are compositionally biased toward low complexity; it reads PGIQGPRGLPGL. Positions 694–812 are triple-helical region 4 (COL4); the sequence is QANVPGLKSI…PGPPGPPGVP (119 aa). Basic and acidic residues-rich tracts occupy residues 714 to 725 and 737 to 758; these read GKYDPAARKGDV and EGPK…KGDE. The span at 764 to 788 shows a compositional bias: low complexity; sequence PGLSGAPGPTGPPGLTGRTGHPGPT. Pro residues-rich tracts occupy residues 800–811 and 834–846; these read PGKPGPPGPPGV and YPGP…PKGD. The segment at 827-1006 is triple-helical region 5 (COL5); the sequence is GGVNVPGYPG…PGIPGTPADA (180 aa). The span at 877-886 shows a compositional bias: low complexity; that stretch reads PGIAGISGKP. Over residues 937–948 the composition is skewed to basic and acidic residues; that stretch reads PGDRGPKGERGD. A Cell attachment site motif is present at residues 946 to 948; sequence RGD. A triple-helical region 6 (COL6) region spans residues 1048–1105; that stretch reads GRPGPPGKDGLPGPPGDPGPQGYRGQKGERGEPGIGLPGSPGLPGSSAVGLPGSPGAP. A compositionally biased stretch (low complexity) spans 1087 to 1101; the sequence is SPGLPGSSAVGLPGS. Pro residues predominate over residues 1102–1113; it reads PGAPGPQGPPGP.

It belongs to the fibril-associated collagens with interrupted helices (FACIT) family. In terms of assembly, oligomer; disulfide-linked. Prolines at the third position of the tripeptide repeating unit (G-X-Y) are hydroxylated in some or all of the chains.

Its subcellular location is the secreted. The protein resides in the extracellular space. It is found in the extracellular matrix. Functionally, may act as a cross-bridge between fibrils and other extracellular matrix molecules. Involved in skeletal myogenesis in the developing esophagus. May play a role in organization of the pericellular matrix or the sphinteric smooth muscle. The chain is Collagen alpha-1(XIX) chain from Mus musculus (Mouse).